Consider the following 107-residue polypeptide: Protein p13 MTCP-1 (107 aa).

The protein belongs to the TCL1 family. Interacts with AKT1 and AKT2 (via PH domain). Does not interact with AKT3. In terms of tissue distribution, not found at a significant level in any tissue.

In terms of biological role, enhances the phosphorylation and activation of AKT1 and AKT2. The protein is Protein p13 MTCP-1 (Mtcp1) of Mus musculus (Mouse).